A 332-amino-acid polypeptide reads, in one-letter code: MSVKEHLIHNVHKEEHGHAHNKITVVGVGAVGMACAISILMKDLADELALVDVVEDKLRGEMLDLQHGSLFLRTPKIVSGKDYSVTANSKLVIITAGARQQEGESRLNLVQRNVNIFKFIIPNVVKHSPDCKLLVVSNPVDIWTYVAWKISGFPKHRVIGSGCNLDSARFRYLMGERLGIHSLSCHGWIVGEHGDSSVPVWSGVNVAGVSLKALHPELGTDADKEHWKEVHKQVVDSAYEVIKLKGYTSWAIGLSVADLAETVMKNLRRVHPISTMVKGMYGIKDDVFLSVPCVLGYHGITDVVMMTLKSEEEEKLRKSADTLWGIQKELQF.

NAD(+) contacts are provided by residues 29 to 57 (GAVG…VEDK) and R99. Residues R106, N138, and R169 each coordinate substrate. N138 is an NAD(+) binding site. H193 functions as the Proton acceptor in the catalytic mechanism. Residue T248 participates in substrate binding.

It belongs to the LDH/MDH superfamily. LDH family. As to quaternary structure, homotetramer.

It localises to the cytoplasm. The catalysed reaction is (S)-lactate + NAD(+) = pyruvate + NADH + H(+). The protein operates within fermentation; pyruvate fermentation to lactate; (S)-lactate from pyruvate: step 1/1. In terms of biological role, interconverts simultaneously and stereospecifically pyruvate and lactate with concomitant interconversion of NADH and NAD(+). This Alligator mississippiensis (American alligator) protein is L-lactate dehydrogenase A chain (LDHA).